Reading from the N-terminus, the 120-residue chain is Large ribosomal subunit protein uL18 (120 aa).

Belongs to the universal ribosomal protein uL18 family. Part of the 50S ribosomal subunit; part of the 5S rRNA/L5/L18/L25 subcomplex. Contacts the 5S and 23S rRNAs.

This is one of the proteins that bind and probably mediate the attachment of the 5S RNA into the large ribosomal subunit, where it forms part of the central protuberance. The chain is Large ribosomal subunit protein uL18 from Methylorubrum populi (strain ATCC BAA-705 / NCIMB 13946 / BJ001) (Methylobacterium populi).